The primary structure comprises 295 residues: Ribosomal RNA small subunit methyltransferase A (295 aa).

S-adenosyl-L-methionine is bound by residues Asn-40, Val-42, Gly-67, Glu-88, Asp-118, and Asn-135.

The protein belongs to the class I-like SAM-binding methyltransferase superfamily. rRNA adenine N(6)-methyltransferase family. RsmA subfamily.

Its subcellular location is the cytoplasm. It carries out the reaction adenosine(1518)/adenosine(1519) in 16S rRNA + 4 S-adenosyl-L-methionine = N(6)-dimethyladenosine(1518)/N(6)-dimethyladenosine(1519) in 16S rRNA + 4 S-adenosyl-L-homocysteine + 4 H(+). Functionally, specifically dimethylates two adjacent adenosines (A1518 and A1519) in the loop of a conserved hairpin near the 3'-end of 16S rRNA in the 30S particle. May play a critical role in biogenesis of 30S subunits. This chain is Ribosomal RNA small subunit methyltransferase A, found in Arthrobacter sp. (strain FB24).